A 484-amino-acid chain; its full sequence is Monocarboxylate transporter 2 (484 aa).

At 1–16 (MPAPTAVPPPHPLPPD) the chain is on the cytoplasmic side. The helical transmembrane segment at 17 to 37 (GGWGWVVVGASFISIGFSYAF) threads the bilayer. Over 38-60 (PKSVTVFFKDIQEIFRAGHSKVA) the chain is Extracellular. The helical transmembrane segment at 61 to 81 (WISSIMLAVMYAGGPISSVLV) threads the bilayer. The Cytoplasmic portion of the chain corresponds to 82–87 (NKYGSR). A helical membrane pass occupies residues 88-108 (PVVVIGGLLCCTGMILASFST). The Extracellular segment spans residues 109–116 (SMIQLYLT). Residues 117–137 (IGFISGLGLAFNLQPALTILG) traverse the membrane as a helical segment. Residues 138–144 (KYFYRRR) are Cytoplasmic-facing. Residues 145–165 (PLASGLAMTGSPVFLSSLAPF) form a helical membrane-spanning segment. Residues 166–174 (NQYLFNSYG) lie on the Extracellular side of the membrane. Residues 175–195 (LKGSFLILGGIFLHSCVAGSL) form a helical membrane-spanning segment. Topologically, residues 196–245 (MRPVGTSQQSPKSKSKVSSRHDSSTKKAPKLTLAQRINMFLDFSLFKHRG) are cytoplasmic. Residues 198 to 223 (PVGTSQQSPKSKSKVSSRHDSSTKKA) form a disordered region. Residues 246 to 266 (FLIYLSGNVIMFLGFFAPVIF) form a helical membrane-spanning segment. The Extracellular segment spans residues 267–281 (LSPYAKNRGVDDYKA). A helical transmembrane segment spans residues 282–302 (AYLLSVMAFVDMFSRPCGGLI). The Cytoplasmic portion of the chain corresponds to 303 to 311 (ANTRLVRPR). Residues 312–332 (IQYFFSLAIVFTGVCHLLCPL) traverse the membrane as a helical segment. Topologically, residues 333-337 (AESYT) are extracellular. The helical transmembrane segment at 338 to 358 (ALVVYAIFFGYGFGSVSSILF) threads the bilayer. The Cytoplasmic segment spans residues 359–372 (ETLMDLVGPARFSS). Residues 373–393 (AVGLVTIVECCPVLLGPPLAG) traverse the membrane as a helical segment. At 394 to 405 (KLVDETGEHKYL) the chain is on the extracellular side. A helical membrane pass occupies residues 406–426 (FVASGAIVVLAGIWLFIGNAI). The Cytoplasmic segment spans residues 427–484 (NYRLLAKERKREKARKKKSPNRHSKELESLSKSNQDDVAVRVPQAHRSPSDKERESNI). The interval 437 to 484 (REKARKKKSPNRHSKELESLSKSNQDDVAVRVPQAHRSPSDKERESNI) is disordered. The span at 438-448 (EKARKKKSPNR) shows a compositional bias: basic residues. Basic and acidic residues-rich tracts occupy residues 449-465 (HSKELESLSKSNQDDVA) and 474-484 (SPSDKERESNI).

This sequence belongs to the major facilitator superfamily. Monocarboxylate porter (TC 2.A.1.13) family. As to quaternary structure, homodimer. Interacts with GRID2IP. Interacts with EMB; interaction mediates SLC16A7 targeting to the plasma membrane. Interacts with isoform 2 of BSG.

It localises to the cell membrane. It is found in the basolateral cell membrane. The protein resides in the cytoplasm. The catalysed reaction is 3-methyl-2-oxobutanoate(out) + H(+)(out) = 3-methyl-2-oxobutanoate(in) + H(+)(in). It carries out the reaction (S)-lactate(in) + H(+)(in) = (S)-lactate(out) + H(+)(out). It catalyses the reaction acetoacetate(out) + H(+)(out) = acetoacetate(in) + H(+)(in). The enzyme catalyses (R)-3-hydroxybutanoate(out) + H(+)(out) = (R)-3-hydroxybutanoate(in) + H(+)(in). The catalysed reaction is 4-methyl-2-oxopentanoate(out) + H(+)(out) = 4-methyl-2-oxopentanoate(in) + H(+)(in). It carries out the reaction pyruvate(out) + H(+)(out) = pyruvate(in) + H(+)(in). It catalyses the reaction (S)-3-hydroxybutanoate(out) + H(+)(out) = (S)-3-hydroxybutanoate(in) + H(+)(in). With respect to regulation, transport activity exhibits steep dependence on substrate concentration. Substrate concentration sensitivity of SLC16A7 arises from the strong inter-subunit cooperativity of the SLC16A7 dimer during transport. Inhibited by AR-C155858. Its function is as follows. Proton-coupled monocarboxylate symporter. Catalyzes the rapid transport across the plasma membrane of monocarboxylates such as L-lactate, pyruvate and ketone bodies, acetoacetate, beta-hydroxybutyrate and acetate. Dimerization is functionally required and both subunits work cooperatively in transporting substrate. In Meriones unguiculatus (Mongolian jird), this protein is Monocarboxylate transporter 2 (SLC16A7).